The chain runs to 797 residues: Phenylalanine--tRNA ligase beta subunit (797 aa).

The tRNA-binding domain maps to 40-154 (MEGLSKLVVG…ADAKVGDSIF (115 aa)). One can recognise a B5 domain in the interval 407–482 (PILPKVSITL…RIYGYDNLPS (76 aa)). The Mg(2+) site is built by D460, D466, E469, and E470. An FDX-ACB domain is found at 704-797 (PKVQAVHRDI…LVEKLDIEIR (94 aa)).

Belongs to the phenylalanyl-tRNA synthetase beta subunit family. Type 1 subfamily. Tetramer of two alpha and two beta subunits. Requires Mg(2+) as cofactor.

It is found in the cytoplasm. The catalysed reaction is tRNA(Phe) + L-phenylalanine + ATP = L-phenylalanyl-tRNA(Phe) + AMP + diphosphate + H(+). This chain is Phenylalanine--tRNA ligase beta subunit, found in Lactococcus lactis subsp. lactis (strain IL1403) (Streptococcus lactis).